The chain runs to 302 residues: MAAINTKVKKAVIPVAGLGTRMLPATKAIPKEMLPLVDKPLIQYVVNECIAAGITEIVLVTHSSKNSIENHFDTSFELEAMLEKRVKRQLLDEVQSICPPHVTIMQVRQGLAKGLGHAVLCAHPVVGDEPVAVILPDVILDEYESDLSQDNLAEMIRRFDETGHSQIMVEPVADVTAYGVVDCKGVELAPGESVPMVGVVEKPKADVAPSNLAIVGRYVLSADIWPLLAKTPPGAGDEIQLTDAIDMLIEKETVEAYHMKGKSHDCGNKLGYMQAFVEYGIRHNTLGTEFKAWLEEEMGIKK.

The protein belongs to the UDPGP type 2 family. In terms of assembly, homotetramer or homopentamer. It depends on Mg(2+) as a cofactor.

It carries out the reaction alpha-D-glucose 1-phosphate + UTP + H(+) = UDP-alpha-D-glucose + diphosphate. Functionally, may play a role in stationary phase survival. This Escherichia coli O157:H7 protein is UTP--glucose-1-phosphate uridylyltransferase (galU).